We begin with the raw amino-acid sequence, 179 residues long: Large ribosomal subunit protein uL5 (179 aa).

The protein belongs to the universal ribosomal protein uL5 family. In terms of assembly, part of the 50S ribosomal subunit; part of the 5S rRNA/L5/L18/L25 subcomplex. Contacts the 5S rRNA and the P site tRNA. Forms a bridge to the 30S subunit in the 70S ribosome.

This is one of the proteins that bind and probably mediate the attachment of the 5S RNA into the large ribosomal subunit, where it forms part of the central protuberance. In the 70S ribosome it contacts protein S13 of the 30S subunit (bridge B1b), connecting the 2 subunits; this bridge is implicated in subunit movement. Contacts the P site tRNA; the 5S rRNA and some of its associated proteins might help stabilize positioning of ribosome-bound tRNAs. This is Large ribosomal subunit protein uL5 from Exiguobacterium sp. (strain ATCC BAA-1283 / AT1b).